A 97-amino-acid chain; its full sequence is Co-chaperonin GroES (97 aa).

It belongs to the GroES chaperonin family. As to quaternary structure, heptamer of 7 subunits arranged in a ring. Interacts with the chaperonin GroEL.

Its subcellular location is the cytoplasm. Functionally, together with the chaperonin GroEL, plays an essential role in assisting protein folding. The GroEL-GroES system forms a nano-cage that allows encapsulation of the non-native substrate proteins and provides a physical environment optimized to promote and accelerate protein folding. GroES binds to the apical surface of the GroEL ring, thereby capping the opening of the GroEL channel. The polypeptide is Co-chaperonin GroES (Sodalis glossinidius (strain morsitans)).